The following is a 714-amino-acid chain: Calpain-1 catalytic subunit (714 aa).

Residues 55–354 (LFRDEAFPPV…FTRLEICNLT (300 aa)) enclose the Calpain catalytic domain. Ca(2+) contacts are provided by Gln-109 and Asp-114. Catalysis depends on residues Cys-115, His-272, and Asn-296. Positions 318 and 323 each coordinate Ca(2+). Phosphothreonine is present on Thr-354. A domain III region spans residues 355-526 (PDALKSQRVR…KKAGTQELDD (172 aa)). A linker region spans residues 527 to 542 (QVQAILPDEQVLSEEE). A domain IV region spans residues 543–713 (IDENFKALFR…LFKWLQLTMF (171 aa)). EF-hand domains follow at residues 585-618 (FSLESCRSMVNLMDRDGNGKLGLVEFNILWNRIR), 615-650 (NRIRNYLSIFRKFDLDKSGSMSAYEMRMAIESAGFK), and 680-714 (VRLETMFRFFKTLDTDLDGVVTFDLFKWLQLTMFA). Asp-598, Asp-600, Asn-602, Lys-604, Glu-609, Asp-628, Asp-630, Ser-632, Ser-634, and Glu-639 together coordinate Ca(2+).

Belongs to the peptidase C2 family. Forms a heterodimer with a small (regulatory) subunit CAPNS1. The cofactor is Ca(2+). Post-translationally, undergoes calcium-induced successive autoproteolytic cleavages that generate a membrane-bound 78 kDa active form and an intracellular 75 kDa active form. Calpastatin reduces with high efficiency the transition from 78 kDa to 75 kDa calpain forms.

It localises to the cytoplasm. It is found in the cell membrane. The catalysed reaction is Broad endopeptidase specificity.. With respect to regulation, activated by micromolar concentrations of calcium and inhibited by calpastatin. Calcium-regulated non-lysosomal thiol-protease which catalyzes limited proteolysis of substrates involved in cytoskeletal remodeling and signal transduction. Proteolytically cleaves CTBP1. Cleaves and activates caspase-7 (CASP7). The protein is Calpain-1 catalytic subunit of Sus scrofa (Pig).